Reading from the N-terminus, the 173-residue chain is Acetyl-CoA decarbonylase/synthase complex subunit epsilon (173 aa).

This sequence belongs to the CdhB family. In terms of assembly, heterotetramer of two alpha and two epsilon subunits. The ACDS complex is made up of alpha, epsilon, beta, gamma and delta subunits with a probable stoichiometry of (alpha(2)epsilon(2))(4)-beta(8)-(gamma(1)delta(1))(8).

It functions in the pathway one-carbon metabolism; methanogenesis from acetate. In terms of biological role, part of a complex that catalyzes the reversible cleavage of acetyl-CoA, allowing growth on acetate as sole source of carbon and energy. The alpha-epsilon subcomponent functions as a carbon monoxide dehydrogenase. The precise role of the epsilon subunit is unclear; it may have a stabilizing role within the alpha(2)epsilon(2) component and/or be involved in electron transfer to FAD during a potential FAD-mediated CO oxidation. This Methanothermobacter thermautotrophicus (strain ATCC 29096 / DSM 1053 / JCM 10044 / NBRC 100330 / Delta H) (Methanobacterium thermoautotrophicum) protein is Acetyl-CoA decarbonylase/synthase complex subunit epsilon.